The sequence spans 247 residues: Uridylate kinase (247 aa).

11-14 (KASG) is an ATP binding site. The interval 19–24 (GKQGFG) is involved in allosteric activation by GTP. G53 is a UMP binding site. Positions 54 and 58 each coordinate ATP. UMP-binding positions include D73 and 134–141 (TGNPFFTT). Positions 161, 162, 167, and 170 each coordinate ATP.

It belongs to the UMP kinase family. As to quaternary structure, homohexamer.

It localises to the cytoplasm. The enzyme catalyses UMP + ATP = UDP + ADP. Its pathway is pyrimidine metabolism; CTP biosynthesis via de novo pathway; UDP from UMP (UMPK route): step 1/1. With respect to regulation, allosterically activated by GTP. Inhibited by UTP. Functionally, catalyzes the reversible phosphorylation of UMP to UDP. This is Uridylate kinase from Chelativorans sp. (strain BNC1).